We begin with the raw amino-acid sequence, 512 residues long: Zinc finger CCCH-type with G patch domain-containing protein (512 aa).

Residues 159–186 (QEMVPCAYFLEGDCKFNDEMCRFSHGEL) form a C3H1-type zinc finger. A disordered region spans residues 255 to 280 (LEGDDVPSSDSESNSDSDEENEDDVV). A compositionally biased stretch (acidic residues) spans 256–279 (EGDDVPSSDSESNSDSDEENEDDV). In terms of domain architecture, G-patch spans 308 to 354 (TKGIGSKIMLKMGYVVGAGLGSKGEGIVVPVSAQVLPQGRSLDYCMQ). Low complexity predominate over residues 407–417 (SSNGSSSSSGS). Positions 407-432 (SSNGSSSSSGSKKPAAKDNQMDLPSC) are disordered.

Its subcellular location is the nucleus. In terms of biological role, transcription repressor. The protein is Zinc finger CCCH-type with G patch domain-containing protein of Aedes aegypti (Yellowfever mosquito).